The following is a 261-amino-acid chain: MSDILDKIITVKREEIAAALESAPLEELKVQASARDSRDFVGALRDKHAAGHAAVIAEVKKASPSKGVLRKHFVPADIARSYAQHGAACLSVLTDERFFQGSARYLEQARAACALPVLRKDFIVDAYQVLEARAMGADAILLIAAALDTPLMIDLEAYAHSLGLAVLVEVHNRGELDEALKLKTPLVGINNRNLRTFETTIDTTLGMLDAIPDDRIVVTESGILSRADVERMEAAGVHTFLVGEAFMRAENPGAELARMFF.

Belongs to the TrpC family.

The catalysed reaction is 1-(2-carboxyphenylamino)-1-deoxy-D-ribulose 5-phosphate + H(+) = (1S,2R)-1-C-(indol-3-yl)glycerol 3-phosphate + CO2 + H2O. The protein operates within amino-acid biosynthesis; L-tryptophan biosynthesis; L-tryptophan from chorismate: step 4/5. This is Indole-3-glycerol phosphate synthase from Burkholderia pseudomallei (strain 1710b).